The chain runs to 173 residues: Ferric citrate uptake sigma factor FecI (173 aa).

A Polymerase core binding motif is present at residues 40 to 52 (DIAQDTFLRVMVS). The segment at residues 139–158 (YSEIAHKLGVSISSVKKYVA) is a DNA-binding region (H-T-H motif).

The protein belongs to the sigma-70 factor family. ECF subfamily. Interacts with FecR (via cytoplasmic N-terminus).

Functionally, sigma factors are initiation factors that promote the attachment of RNA polymerase to specific initiation sites and are then released. This sigma factor regulates transcriptional activation of the fecABCDE operon which mediates ferric citrate transport. This Escherichia coli (strain K12) protein is Ferric citrate uptake sigma factor FecI (fecI).